Consider the following 359-residue polypeptide: Growth hormone-regulated TBC protein 1 (359 aa).

A Rab-GAP TBC domain is found at 74–281 (GIPLEHRARV…RIWDCLFNEG (208 aa)).

As to expression, highly expressed in testes, expression greatly increased at postnatal day 20 and remained high up to day 90. Moderately expressed in kidney and liver, weakly expressed in intestine, lung, ovaries and stomach. Expression of Growth hormone increased the expression in testis but decreased expression in liver and kidney.

May act as a GTPase-activating protein for Rab family protein(s). This is Growth hormone-regulated TBC protein 1 (Grtp1) from Mus musculus (Mouse).